Reading from the N-terminus, the 350-residue chain is Hydroxymethylglutaryl-CoA synthase (350 aa).

Catalysis depends on Glu83, which acts as the Proton donor/acceptor. The active-site Acyl-thioester intermediate is the Cys115. Residues Cys115 and Thr156 each coordinate (3S)-3-hydroxy-3-methylglutaryl-CoA. Position 204 (Arg204) interacts with CoA. (3S)-3-hydroxy-3-methylglutaryl-CoA is bound by residues Thr206 and His239. His239 (proton donor/acceptor) is an active-site residue. Position 244 (Lys244) interacts with CoA. 2 residues coordinate (3S)-3-hydroxy-3-methylglutaryl-CoA: Asn271 and Ser301.

Belongs to the thiolase-like superfamily. Archaeal HMG-CoA synthase family. Interacts with acetoacetyl-CoA thiolase that catalyzes the precedent step in the pathway and with a DUF35 protein. The acetoacetyl-CoA thiolase/HMG-CoA synthase complex channels the intermediate via a fused CoA-binding site, which allows for efficient coupling of the endergonic thiolase reaction with the exergonic HMGCS reaction.

It carries out the reaction acetoacetyl-CoA + acetyl-CoA + H2O = (3S)-3-hydroxy-3-methylglutaryl-CoA + CoA + H(+). The protein operates within metabolic intermediate biosynthesis; (R)-mevalonate biosynthesis; (R)-mevalonate from acetyl-CoA: step 2/3. Functionally, catalyzes the condensation of acetyl-CoA with acetoacetyl-CoA to form 3-hydroxy-3-methylglutaryl-CoA (HMG-CoA). Functions in the mevalonate (MVA) pathway leading to isopentenyl diphosphate (IPP), a key precursor for the biosynthesis of isoprenoid compounds that are building blocks of archaeal membrane lipids. In Thermococcus gammatolerans (strain DSM 15229 / JCM 11827 / EJ3), this protein is Hydroxymethylglutaryl-CoA synthase.